The chain runs to 347 residues: 4-hydroxy-2-oxovalerate aldolase 2 (347 aa).

The region spanning 9 to 259 is the Pyruvate carboxyltransferase domain; the sequence is ITIVDTTLRD…DTGVDLFPLI (251 aa). Residues 17 to 18, S171, and H198 contribute to the substrate site; that span reads RD. A Mn(2+)-binding site is contributed by D18. 2 residues coordinate Mn(2+): H198 and H200. Y289 contacts substrate.

This sequence belongs to the 4-hydroxy-2-oxovalerate aldolase family.

The enzyme catalyses (S)-4-hydroxy-2-oxopentanoate = acetaldehyde + pyruvate. The chain is 4-hydroxy-2-oxovalerate aldolase 2 from Rhodococcus opacus (strain B4).